Here is a 267-residue protein sequence, read N- to C-terminus: 3-methyl-2-oxobutanoate hydroxymethyltransferase (267 aa).

Asp41 and Asp80 together coordinate Mg(2+). Residues 41-42 (DS), Asp80, and Lys109 each bind 3-methyl-2-oxobutanoate. Glu111 is a binding site for Mg(2+). The active-site Proton acceptor is the Glu178.

This sequence belongs to the PanB family. In terms of assembly, homodecamer; pentamer of dimers. The cofactor is Mg(2+).

It localises to the cytoplasm. It catalyses the reaction 3-methyl-2-oxobutanoate + (6R)-5,10-methylene-5,6,7,8-tetrahydrofolate + H2O = 2-dehydropantoate + (6S)-5,6,7,8-tetrahydrofolate. Its pathway is cofactor biosynthesis; (R)-pantothenate biosynthesis; (R)-pantoate from 3-methyl-2-oxobutanoate: step 1/2. Its function is as follows. Catalyzes the reversible reaction in which hydroxymethyl group from 5,10-methylenetetrahydrofolate is transferred onto alpha-ketoisovalerate to form ketopantoate. This Kosmotoga olearia (strain ATCC BAA-1733 / DSM 21960 / TBF 19.5.1) protein is 3-methyl-2-oxobutanoate hydroxymethyltransferase.